A 304-amino-acid chain; its full sequence is Non-specific ribonucleoside hydrolase RihC (304 aa).

The active site involves histidine 233.

Belongs to the IUNH family. RihC subfamily.

Functionally, hydrolyzes both purine and pyrimidine ribonucleosides with a broad-substrate specificity. The protein is Non-specific ribonucleoside hydrolase RihC of Escherichia coli (strain SE11).